Consider the following 309-residue polypeptide: Formimidoylglutamase (309 aa).

Positions 120, 145, 147, 149, 236, and 238 each coordinate Mn(2+).

Belongs to the arginase family. It depends on Mn(2+) as a cofactor.

The enzyme catalyses N-formimidoyl-L-glutamate + H2O = formamide + L-glutamate. The protein operates within amino-acid degradation; L-histidine degradation into L-glutamate; L-glutamate from N-formimidoyl-L-glutamate (hydrolase route): step 1/1. Its function is as follows. Catalyzes the conversion of N-formimidoyl-L-glutamate to L-glutamate and formamide. The sequence is that of Formimidoylglutamase from Chromobacterium violaceum (strain ATCC 12472 / DSM 30191 / JCM 1249 / CCUG 213 / NBRC 12614 / NCIMB 9131 / NCTC 9757 / MK).